The primary structure comprises 170 residues: Sec-independent protein translocase protein TATA, chloroplastic (170 aa).

The N-terminal 61 residues, 1–61 (MGIPVVVPVA…GGSGGDLAAV (61 aa)), are a transit peptide targeting the chloroplast. Residues 62 to 84 (AASVAARPRRAGSGGGGALGCKC) are Lumenal-facing. Residues 85 to 105 (LFGLGVPELAVIAGVAALVFG) traverse the membrane as a helical segment. Over 106-170 (PKQLPEIGRS…LEASSSKESA (65 aa)) the chain is Stromal. A compositionally biased stretch (basic and acidic residues) spans 130 to 139 (FETELKKEPG). The tract at residues 130-170 (FETELKKEPGEGGDQPPPATPTAVSGGEEKGLEASSSKESA) is disordered.

It belongs to the TatA/E family. In terms of assembly, in thylakoid membranes, TATC and TATB form a large receptor complex, containing about eight TATC-TATB pairs, which binds the precursor protein. Twin arginine signal peptide promotes pH-triggered docking of TATA oligomers to TATC-TATB receptor complex, inducing a conformational switch of TATA that results in activation of the translocase. TATA dissociates from TATC-TATB upon completion of translocation.

The protein localises to the plastid. Its subcellular location is the chloroplast thylakoid membrane. In terms of biological role, part of the twin-arginine translocation (Tat) system that transports large folded proteins containing a characteristic twin-arginine motif in their signal peptide across the thylakoid membrane. Involved in delta pH-dependent protein transport required for chloroplast development, especially thylakoid membrane formation. TATC and TATB mediate precursor recognition, whereas TATA facilitates translocation. The chain is Sec-independent protein translocase protein TATA, chloroplastic from Zea mays (Maize).